Here is a 92-residue protein sequence, read N- to C-terminus: UPF0250 protein XCC3453 (92 aa).

The protein belongs to the UPF0250 family.

The protein is UPF0250 protein XCC3453 of Xanthomonas campestris pv. campestris (strain ATCC 33913 / DSM 3586 / NCPPB 528 / LMG 568 / P 25).